The primary structure comprises 402 residues: Olfactomedin-like protein 1 (402 aa).

The signal sequence occupies residues 1-28 (MMVALPGASASLVLFLAAFLPPLQHAQD). Asn-66 carries an N-linked (GlcNAc...) asparagine glycan. Residues 73-135 (RCQTHTNEYR…EAEEEKKIRT (63 aa)) adopt a coiled-coil conformation. Asn-138 and Asn-183 each carry an N-linked (GlcNAc...) asparagine glycan. One can recognise an Olfactomedin-like domain in the interval 140–397 (SCDNMLMAIK…QIIYKLQTKK (258 aa)). A disulfide bond links Cys-141 and Cys-324.

In terms of processing, highly N-glycosylated.

Its subcellular location is the secreted. The polypeptide is Olfactomedin-like protein 1 (Olfml1) (Rattus norvegicus (Rat)).